A 112-amino-acid polypeptide reads, in one-letter code: Nitrogenase-stabilizing/protective protein NifW (112 aa).

This sequence belongs to the NifW family. In terms of assembly, homotrimer; associates with NifD.

Functionally, may protect the nitrogenase Fe-Mo protein from oxidative damage. The sequence is that of Nitrogenase-stabilizing/protective protein NifW from Burkholderia vietnamiensis (strain G4 / LMG 22486) (Burkholderia cepacia (strain R1808)).